We begin with the raw amino-acid sequence, 195 residues long: Cysteine/O-acetylserine efflux protein (195 aa).

Residues 1 to 7 lie on the Periplasmic side of the membrane; that stretch reads MTPTLLS. A helical transmembrane segment spans residues 8–28; that stretch reads AFWTYTLITAMTPGPNNILAL. Residues 29 to 46 lie on the Cytoplasmic side of the membrane; the sequence is SSATSHGFRQSTRVLAGM. Residues 47–67 traverse the membrane as a helical segment; it reads SLGFLIVMLLCAGISFSLAVI. Residues 68–69 lie on the Periplasmic side of the membrane; it reads DP. The chain crosses the membrane as a helical span at residues 70–90; sequence AAVHLLSWAGAAYIVWLAWKI. The Cytoplasmic segment spans residues 91–104; the sequence is ATSPTKEDGLQTKP. The chain crosses the membrane as a helical span at residues 105–125; the sequence is ISFWASFALQFVNVKIILYGV. The Periplasmic segment spans residues 126-141; that stretch reads TALSTFVLPQTQALSW. The helical transmembrane segment at 142–162 threads the bilayer; that stretch reads VVGVSVLLAMIGTFGNVCWAL. Over 163–176 the chain is Cytoplasmic; it reads AGHLFQRLFRQYGR. A helical transmembrane segment spans residues 177–194; the sequence is QLNIVLALLLVYCAVRIF. Position 195 (Y195) is a topological domain, periplasmic.

It belongs to the Rht family.

The protein resides in the cell inner membrane. The enzyme catalyses O-acetyl-L-serine(in) = O-acetyl-L-serine(out). The catalysed reaction is L-cysteine(in) = L-cysteine(out). Exporter of O-acetylserine (OAS) and cysteine. This Escherichia coli O1:K1 / APEC protein is Cysteine/O-acetylserine efflux protein (eamB).